A 77-amino-acid polypeptide reads, in one-letter code: Conotoxin G11.1 (77 aa).

A signal peptide spans 1 to 20; that stretch reads MKLFLAIVLILMLQFLSTGA. Positions 21–45 are excised as a propeptide; that stretch reads ETSDNHASRSTTALRDWLLGPKAKR. Cystine bridges form between cysteine 46-cysteine 60, cysteine 53-cysteine 65, cysteine 59-cysteine 69, and cysteine 64-cysteine 76.

The protein belongs to the conotoxin I3 superfamily. Expressed by the venom duct.

The protein resides in the secreted. Functionally, may embed in the membrane and bind to the voltage sensor domain of a ion channel. Does not induce paralysis when injected in fish, leading to the hypothesis that it may be part of the sedative nirvana cabal. This is Conotoxin G11.1 from Conus geographus (Geography cone).